We begin with the raw amino-acid sequence, 29 residues long: Brevinin-2Rd (29 aa).

A disulfide bridge connects residues C23 and C29.

In terms of tissue distribution, expressed by the skin glands.

It localises to the secreted. Antimicrobial peptide. This Pelophylax ridibundus (Marsh frog) protein is Brevinin-2Rd.